The sequence spans 92 residues: Small ribosomal subunit protein uS19 (92 aa).

Belongs to the universal ribosomal protein uS19 family.

Its function is as follows. Protein S19 forms a complex with S13 that binds strongly to the 16S ribosomal RNA. The chain is Small ribosomal subunit protein uS19 from Agrobacterium fabrum (strain C58 / ATCC 33970) (Agrobacterium tumefaciens (strain C58)).